The following is a 148-amino-acid chain: Ribonuclease H (148 aa).

The RNase H type-1 domain occupies 1 to 142 (MSDSVELYTD…ADQLANRGVD (142 aa)). Mg(2+) contacts are provided by D10, E48, D70, and D134. A disordered region spans residues 129-148 (GNERADQLANRGVDEVRAKR).

It belongs to the RNase H family. In terms of assembly, monomer. Requires Mg(2+) as cofactor.

The protein resides in the cytoplasm. It carries out the reaction Endonucleolytic cleavage to 5'-phosphomonoester.. Functionally, endonuclease that specifically degrades the RNA of RNA-DNA hybrids. The sequence is that of Ribonuclease H from Pseudomonas putida (strain W619).